The sequence spans 220 residues: Iron-sulfur cluster repair protein YtfE (220 aa).

The protein belongs to the RIC family. YtfE subfamily. Homodimer.

It localises to the cytoplasm. Its function is as follows. Di-iron-containing protein involved in the repair of iron-sulfur clusters damaged by oxidative and nitrosative stress conditions. The chain is Iron-sulfur cluster repair protein YtfE from Salmonella choleraesuis (strain SC-B67).